Here is a 3075-residue protein sequence, read N- to C-terminus: Laminin subunit alpha-1 (3075 aa).

Residues 1 to 17 (MRGGVLLVLLLCVAAQC) form the signal peptide. The region spanning 18 to 269 (RQRGLFPAIL…SIKDISVGGM (252 aa)) is the Laminin N-terminal domain. Cystine bridges form between C270–C279, C272–C290, C292–C301, C304–C324, C327–C336, C329–C361, C364–C373, C376–C394, C397–C409, C399–C427, C429–C438, C441–C451, C454–C467, C456–C471, C473–C482, and C485–C500. Laminin EGF-like domains lie at 270 to 326 (CICY…TCEA), 327 to 396 (CNCH…PCRP), 397 to 453 (CNCD…TCVS), and 454 to 502 (CGCN…GCSE). Residues 503 to 512 (CFCFGVSDVC) form the Laminin EGF-like 5; first part domain. The region spanning 516 to 708 (SWPVGQVNSM…DLVVAADVEH (193 aa)) is the Laminin IV type A 1 domain. N-linked (GlcNAc...) asparagine glycosylation is present at N665. Residues 709-741 (CECPQGYTGTSCESCLSGYYRVDGILFGGICQP) form the Laminin EGF-like 5; second part domain. Disulfide bonds link C742–C751, C744–C757, C760–C769, C772–C788, C791–C806, C793–C816, C819–C828, C831–C846, C849–C863, C851–C870, C873–C882, C885–C899, C902–C914, C904–C921, C923–C932, C935–C948, C951–C963, C953–C969, C971–C980, C983–C995, C998–C1007, C1000–C1014, C1016–C1025, C1028–C1041, C1044–C1056, C1046–C1063, C1065–C1074, C1077–C1087, C1090–C1102, C1092–C1118, C1120–C1129, and C1132–C1147. 8 consecutive Laminin EGF-like domains span residues 742-790 (CECH…DCQP), 791-848 (CACP…SCVP), 849-901 (CDCS…NCRA), 902-950 (CECH…GCRP), 951-997 (CNCS…SCTP), 998-1043 (CDCP…GCQA), 1044-1089 (CNCS…DCVP), and 1090-1149 (CDCD…GCSP). The region spanning 1150-1159 (CFCSGLSHLC) is the Laminin EGF-like 14; first part domain. The Laminin IV type A 2 domain maps to 1170-1361 (VTLGSDQPLL…EEEVASLLEN (192 aa)). A Laminin EGF-like 14; second part domain is found at 1362 to 1402 (CVCPPGTVGFSCQDCAPGYHRGKLPAGSDRGPRPLVAPCVP). 12 disulfides stabilise this stretch: C1403–C1412, C1405–C1419, C1422–C1431, C1434–C1449, C1452–C1466, C1454–C1476, C1479–C1488, C1491–C1506, C1509–C1521, C1511–C1528, C1530–C1539, and C1542–C1553. Laminin EGF-like domains are found at residues 1403-1451 (CSCN…DCAL), 1452-1508 (CACP…SCQK), and 1509-1555 (CDCN…DCVS). The segment at 1556 to 2116 (CDDECVGVLL…SQARKQAASI (561 aa)) is domain II and I. 5 N-linked (GlcNAc...) asparagine glycosylation sites follow: N1579, N1689, N1717, N2047, and N2243. Positions 1706–1783 (MQIRDFTQLH…KMQESNHLLL (78 aa)) form a coiled coil. 5 consecutive Laminin G-like domains span residues 2117–2297 (KVAV…CRGC), 2305–2481 (DPSF…RKGC), 2486–2673 (IRSV…LDTC), 2713–2885 (AHQF…VNRC), and 2890–3070 (QEGT…LHSC). 2 disulfide bridges follow: C2271–C2297 and C2457–C2481. Positions 2534-2536 (RGD) match the Cell attachment site motif. Cystine bridges form between C2646/C2673, C2860/C2885, and C3039/C3070.

In terms of assembly, laminin is a complex glycoprotein, consisting of three different polypeptide chains (alpha, beta, gamma), which are bound to each other by disulfide bonds into a cross-shaped molecule comprising one long and three short arms with globules at each end. Alpha-1 is a subunit of laminin-1 (laminin-111 or EHS laminin) and laminin-3 (laminin-121 or S-laminin). In terms of processing, tyrosine phosphorylated by PKDCC/VLK.

It localises to the secreted. It is found in the extracellular space. The protein resides in the extracellular matrix. Its subcellular location is the basement membrane. Binding to cells via a high affinity receptor, laminin is thought to mediate the attachment, migration and organization of cells into tissues during embryonic development by interacting with other extracellular matrix components. This chain is Laminin subunit alpha-1 (LAMA1), found in Homo sapiens (Human).